We begin with the raw amino-acid sequence, 421 residues long: Ribosomal RNA large subunit methyltransferase G (421 aa).

A disordered region spans residues 389–421 (EPELEQESDLNSKLDANTEVPHPQSALYGKPKA).

It belongs to the methyltransferase superfamily. RlmG family.

The protein localises to the cytoplasm. It carries out the reaction guanosine(1835) in 23S rRNA + S-adenosyl-L-methionine = N(2)-methylguanosine(1835) in 23S rRNA + S-adenosyl-L-homocysteine + H(+). Specifically methylates the guanine in position 1835 (m2G1835) of 23S rRNA. The protein is Ribosomal RNA large subunit methyltransferase G of Shewanella halifaxensis (strain HAW-EB4).